The sequence spans 522 residues: Ribonuclease Y (522 aa).

The chain crosses the membrane as a helical span at residues Ser-7–Ser-23. The 67-residue stretch at Leu-212 to Asp-278 folds into the KH domain. The HD domain occupies Ala-338 to Ala-431.

This sequence belongs to the RNase Y family.

It is found in the cell membrane. Its function is as follows. Endoribonuclease that initiates mRNA decay. This chain is Ribonuclease Y, found in Sulfurimonas denitrificans (strain ATCC 33889 / DSM 1251) (Thiomicrospira denitrificans (strain ATCC 33889 / DSM 1251)).